The primary structure comprises 293 residues: Formamidopyrimidine-DNA glycosylase (293 aa).

Pro-2 acts as the Schiff-base intermediate with DNA in catalysis. Glu-3 functions as the Proton donor in the catalytic mechanism. Lys-58 acts as the Proton donor; for beta-elimination activity in catalysis. Residues His-104, Arg-127, and Arg-170 each coordinate DNA. Residues 257 to 293 (SVYGREGKPCRNPACGGTVERVVQSGRSTFFCASCQT) form an FPG-type zinc finger. Arg-283 serves as the catalytic Proton donor; for delta-elimination activity.

Belongs to the FPG family. Monomer. Zn(2+) serves as cofactor.

It catalyses the reaction Hydrolysis of DNA containing ring-opened 7-methylguanine residues, releasing 2,6-diamino-4-hydroxy-5-(N-methyl)formamidopyrimidine.. The enzyme catalyses 2'-deoxyribonucleotide-(2'-deoxyribose 5'-phosphate)-2'-deoxyribonucleotide-DNA = a 3'-end 2'-deoxyribonucleotide-(2,3-dehydro-2,3-deoxyribose 5'-phosphate)-DNA + a 5'-end 5'-phospho-2'-deoxyribonucleoside-DNA + H(+). Functionally, involved in base excision repair of DNA damaged by oxidation or by mutagenic agents. Acts as a DNA glycosylase that recognizes and removes damaged bases. Has a preference for oxidized purines, such as 7,8-dihydro-8-oxoguanine (8-oxoG). Has AP (apurinic/apyrimidinic) lyase activity and introduces nicks in the DNA strand. Cleaves the DNA backbone by beta-delta elimination to generate a single-strand break at the site of the removed base with both 3'- and 5'-phosphates. The protein is Formamidopyrimidine-DNA glycosylase of Brucella melitensis biotype 1 (strain ATCC 23456 / CCUG 17765 / NCTC 10094 / 16M).